The primary structure comprises 344 residues: Galactoside alpha-(1,2)-fucosyltransferase 2 (344 aa).

Topologically, residues 1–7 are cytoplasmic; sequence MFSTQTF. Residues 8–28 traverse the membrane as a helical; Signal-anchor for type II membrane protein segment; it reads FFFPTAPFILFVFTASTIFHL. The Lumenal portion of the chain corresponds to 29–344; that stretch reads HQRLEKMQPT…PADLSPLLKH (316 aa). Residues Asn-189, Asn-255, Asn-283, and Asn-309 are each glycosylated (N-linked (GlcNAc...) asparagine).

As to expression, expressed in brain, heart, lung, intestin and kidney.

The protein localises to the golgi apparatus. The protein resides in the golgi stack membrane. It carries out the reaction a beta-D-galactosyl-(1-&gt;3)-N-acetyl-beta-D-glucosaminyl derivative + GDP-beta-L-fucose = an alpha-L-Fuc-(1-&gt;2)-beta-D-Gal-(1-&gt;3)-beta-D-GlcNAc derivative + GDP + H(+). It catalyses the reaction a beta-D-galactosyl-(1-&gt;4)-N-acetyl-beta-D-glucosaminyl derivative + GDP-beta-L-fucose = an alpha-L-Fuc-(1-&gt;2)-beta-D-Gal-(1-&gt;4)-beta-D-GlcNAc derivative + GDP + H(+). The enzyme catalyses a ganglioside GM1 + GDP-beta-L-fucose = a ganglioside Fuc-GM1 + GDP + H(+). The catalysed reaction is a neolactoside nLc4Cer + GDP-beta-L-fucose = a neolactoside IV(2)-alpha-Fuc-nLc4Cer + GDP + H(+). It carries out the reaction a neolactoside nLc4Cer(d18:1(4E)) + GDP-beta-L-fucose = a neolactoside IV(2)-alpha-Fuc-nLc4Cer(d18:1(4E)) + GDP + H(+). It catalyses the reaction a ganglioside GA1 + GDP-beta-L-fucose = a ganglioside Fuc-GA1 + GDP + H(+). The enzyme catalyses Lc4Cer + GDP-beta-L-fucose = alpha-L-fucosyl-(1-&gt;2)-beta-D-galactosyl-(1-&gt;3)-N-acetyl-beta-D-glucosaminyl-(1-&gt;3)-beta-D-galactosyl-(1-&gt;4)-beta-D-glucosyl-(1&lt;-&gt;1')-ceramide + GDP + H(+). The catalysed reaction is a beta-D-Gal-(1-&gt;3)-beta-D-GlcNAc-(1-&gt;3)-beta-D-Gal-(1-&gt;4)-beta-D-Glc-(1&lt;-&gt;1')-Cer(d18:1(4E)) + GDP-beta-L-fucose = alpha-L-fucosyl-(1-&gt;2)- beta-D-galactosyl-(1-&gt;3)-N-acetyl-beta-D-glucosaminyl-(1-&gt;3)-beta-D-galactosyl-(1-&gt;4)-beta-D-glucosyl-(1&lt;-&gt;1')-N-acylsphing-4-enine + GDP + H(+). It carries out the reaction a ganglioside GD1b + GDP-beta-L-fucose = a ganglioside Fuc-GD1b + GDP + H(+). It catalyses the reaction a ganglioside GM1 (d18:1(4E)) + GDP-beta-L-fucose = a ganglioside Fuc-GM1 (d18:1(4E)) + GDP + H(+). The enzyme catalyses a globoside GalGb4Cer (d18:1(4E)) + GDP-beta-L-fucose = a globoside Globo-H (d18:1(4E)) + GDP + H(+). The catalysed reaction is a lactoside III(4)-a-Fuc-Lc4Cer + GDP-beta-L-fucose = a lactoside IV(2),III(4)-a-[Fuc]2-Lc4Cer + GDP + H(+). It carries out the reaction beta-D-galactosyl-(1-&gt;3)-N-acetyl-D-galactosamine + GDP-beta-L-fucose = alpha-L-fucosyl-(1-&gt;2)-beta-D-galactosyl-(1-&gt;3)-N-acetyl-D-galactosamine + GDP + H(+). It functions in the pathway protein modification; protein glycosylation. In terms of biological role, catalyzes the transfer of L-fucose, from a guanosine diphosphate-beta-L-fucose, to the terminal galactose on both O- and N-linked glycans chains of cell surface glycoproteins and glycolipids and the resulting epitope regulates several processes such as cell-cell interaction including host-microbe interaction, cell surface expression and cell proliferation. Preferentially fucosylates gangliosides GA1 and GM1 in the antrum, cecum and colon and in the female reproductive organs. Fucosylated host glycoproteins or glycolipids mediate interaction with intestinal microbiota influencing its composition. Creates a soluble precursor oligosaccharide FuC-alpha ((1,2)Galbeta-) called the H antigen which is an essential substrate for the final step in the soluble ABO blood group antigen synthesis pathway. In Bos taurus (Bovine), this protein is Galactoside alpha-(1,2)-fucosyltransferase 2.